We begin with the raw amino-acid sequence, 101 residues long: Apolipoprotein C-II (101 aa).

An N-terminal signal peptide occupies residues 1–22 (MGTRYLLVLLLVLLVLGFEVQG). The segment at 66-74 (TMDEKIRDI) is lipid binding. The interval 78 to 101 (STAAVSTYAGIFTDQLLSMLKGDS) is lipoprotein lipase cofactor.

Belongs to the apolipoprotein C2 family. Proapolipoprotein C-II is synthesized as a sialic acid containing glycoprotein which is subsequently desialylated prior to its proteolytic processing. In terms of processing, proapolipoprotein C-II, the major form found in plasma undergoes proteolytic cleavage of its N-terminal hexapeptide to generate apolipoprotein C-II, which occurs as the minor form in plasma. Highly expressed in the liver. Moderately expressed in the ileum, jejunum and ovary.

The protein resides in the secreted. Component of chylomicrons, very low-density lipoproteins (VLDL), low-density lipoproteins (LDL), and high-density lipoproteins (HDL) in plasma. Plays an important role in lipoprotein metabolism as an activator of lipoprotein lipase. Both proapolipoprotein C-II and apolipoprotein C-II can activate lipoprotein lipase. This chain is Apolipoprotein C-II (APOC2), found in Canis lupus familiaris (Dog).